We begin with the raw amino-acid sequence, 357 residues long: Protein RecA (357 aa).

67–74 (GPESSGKT) contacts ATP. The interval 333 to 357 (NELTPATAGNSHDEDAFADEGNEEF) is disordered. Acidic residues predominate over residues 348 to 357 (AFADEGNEEF).

The protein belongs to the RecA family.

The protein localises to the cytoplasm. Functionally, can catalyze the hydrolysis of ATP in the presence of single-stranded DNA, the ATP-dependent uptake of single-stranded DNA by duplex DNA, and the ATP-dependent hybridization of homologous single-stranded DNAs. It interacts with LexA causing its activation and leading to its autocatalytic cleavage. This chain is Protein RecA, found in Pectobacterium carotovorum subsp. carotovorum (strain PC1).